The chain runs to 229 residues: Acidic leucine-rich nuclear phosphoprotein 32-related protein 1 (229 aa).

LRR repeat units follow at residues 19 to 40 (TVDT…TDQL), 42 to 63 (NLEM…PTLP), 64 to 85 (ALTY…DVLV), and 90 to 110 (DLKK…RCLK). An LRRCT domain is found at 124–164 (PSLGLLEDYREKMFEMIPSLKILDGCDVDGEEVEEEFAGEG). Acidic residues predominate over residues 155 to 177 (EVEEEFAGEGGEDSEEGSGDEDG). Positions 155 to 229 (EVEEEFAGEG…DNKKAAGDDE (75 aa)) are disordered. Over residues 219-229 (PDNKKAAGDDE) the composition is skewed to basic and acidic residues.

Belongs to the ANP32 family.

In Caenorhabditis elegans, this protein is Acidic leucine-rich nuclear phosphoprotein 32-related protein 1.